We begin with the raw amino-acid sequence, 279 residues long: Pantothenate synthetase (279 aa).

30–37 lines the ATP pocket; that stretch reads MGALHAGH. Residue H37 is the Proton donor of the active site. Q61 contacts (R)-pantoate. Q61 serves as a coordination point for beta-alanine. 147-150 is a binding site for ATP; it reads GEKD. Q153 serves as a coordination point for (R)-pantoate. ATP is bound by residues A176 and 184 to 187; that span reads LSSR.

The protein belongs to the pantothenate synthetase family. As to quaternary structure, homodimer.

It localises to the cytoplasm. It carries out the reaction (R)-pantoate + beta-alanine + ATP = (R)-pantothenate + AMP + diphosphate + H(+). The protein operates within cofactor biosynthesis; (R)-pantothenate biosynthesis; (R)-pantothenate from (R)-pantoate and beta-alanine: step 1/1. Functionally, catalyzes the condensation of pantoate with beta-alanine in an ATP-dependent reaction via a pantoyl-adenylate intermediate. In Sphingopyxis alaskensis (strain DSM 13593 / LMG 18877 / RB2256) (Sphingomonas alaskensis), this protein is Pantothenate synthetase.